The chain runs to 124 residues: UPF0738 protein ABC2521 (124 aa).

It belongs to the UPF0738 family.

The chain is UPF0738 protein ABC2521 from Shouchella clausii (strain KSM-K16) (Alkalihalobacillus clausii).